Reading from the N-terminus, the 325-residue chain is Beta-ketoacyl-[acyl-carrier-protein] synthase III (325 aa).

Active-site residues include Cys-116 and His-252. Residues Gln-253–Arg-257 form an ACP-binding region. Asn-282 is a catalytic residue.

It belongs to the thiolase-like superfamily. FabH family. Homodimer.

The protein localises to the cytoplasm. The enzyme catalyses butanoyl-CoA + malonyl-[ACP] + H(+) = 3-oxohexanoyl-[ACP] + CO2 + CoA. It carries out the reaction hexanoyl-CoA + malonyl-[ACP] + H(+) = 3-oxooctanoyl-[ACP] + CO2 + CoA. The catalysed reaction is octanoyl-CoA + malonyl-[ACP] + H(+) = 3-oxodecanoyl-[ACP] + CO2 + CoA. It catalyses the reaction decanoyl-CoA + malonyl-[ACP] + H(+) = 3-oxododecanoyl-[ACP] + CO2 + CoA. The enzyme catalyses 2-methylpropanoyl-CoA + malonyl-[ACP] + H(+) = 4-methyl-3-oxopentanoyl-[ACP] + CO2 + CoA. It carries out the reaction 3-methylbutanoyl-CoA + malonyl-[ACP] + H(+) = 5-methyl-3-oxohexanoyl-[ACP] + CO2 + CoA. The catalysed reaction is malonyl-[ACP] + acetyl-CoA + H(+) = 3-oxobutanoyl-[ACP] + CO2 + CoA. It functions in the pathway lipid metabolism; fatty acid biosynthesis. Its function is as follows. Catalyzes the condensation reaction of fatty acid synthesis by the addition to an acyl acceptor of two carbons from malonyl-ACP. Catalyzes the first condensation reaction which initiates fatty acid synthesis and may therefore play a role in governing the total rate of fatty acid production. Possesses both acetoacetyl-ACP synthase and acetyl transacylase activities. Can use a wide range of acyl-CoAs as the primer substrate in vitro, with a slight preference for short, medium-straight chain acyl-CoAs. Can also use branched-chain acyl-CoAs and acetyl-CoA. This Xanthomonas campestris pv. campestris (strain 8004) protein is Beta-ketoacyl-[acyl-carrier-protein] synthase III.